The chain runs to 66 residues: Large ribosomal subunit protein bL35 (66 aa).

Over residues 1–26 the composition is skewed to basic residues; it reads MPKMKTHRGSAKRFKKTGSGKLKRSH. A disordered region spans residues 1–48; the sequence is MPKMKTHRGSAKRFKKTGSGKLKRSHAYTSHLFANKSQKQKRKLRKSA.

This sequence belongs to the bacterial ribosomal protein bL35 family.

In Bacillus licheniformis (strain ATCC 14580 / DSM 13 / JCM 2505 / CCUG 7422 / NBRC 12200 / NCIMB 9375 / NCTC 10341 / NRRL NRS-1264 / Gibson 46), this protein is Large ribosomal subunit protein bL35.